A 102-amino-acid polypeptide reads, in one-letter code: Monothiol glutaredoxin-S7 (102 aa).

The Glutaredoxin domain maps to 1–101 (MEKLQKMTSE…PMLKRVGALW (101 aa)). C21 is a [2Fe-2S] cluster binding site. A Responsive for interaction with TGA factors motif is present at residues 99 to 102 (ALWL).

This sequence belongs to the glutaredoxin family. CC-type subfamily.

The protein resides in the cytoplasm. It is found in the nucleus. In terms of biological role, may only reduce GSH-thiol disulfides, but not protein disulfides. The protein is Monothiol glutaredoxin-S7 (GRXS7) of Arabidopsis thaliana (Mouse-ear cress).